The following is a 144-amino-acid chain: Large ribosomal subunit protein uL13 (144 aa).

Belongs to the universal ribosomal protein uL13 family. In terms of assembly, part of the 50S ribosomal subunit.

This protein is one of the early assembly proteins of the 50S ribosomal subunit, although it is not seen to bind rRNA by itself. It is important during the early stages of 50S assembly. The sequence is that of Large ribosomal subunit protein uL13 from Blochmanniella pennsylvanica (strain BPEN).